The following is a 123-amino-acid chain: Large ribosomal subunit protein bL12 (123 aa).

This sequence belongs to the bacterial ribosomal protein bL12 family. In terms of assembly, homodimer. Part of the ribosomal stalk of the 50S ribosomal subunit. Forms a multimeric L10(L12)X complex, where L10 forms an elongated spine to which 2 to 4 L12 dimers bind in a sequential fashion. Binds GTP-bound translation factors.

Forms part of the ribosomal stalk which helps the ribosome interact with GTP-bound translation factors. Is thus essential for accurate translation. The chain is Large ribosomal subunit protein bL12 from Clostridium botulinum (strain ATCC 19397 / Type A).